A 188-amino-acid polypeptide reads, in one-letter code: Protein GrpE (188 aa).

Low complexity predominate over residues Met1 to Ala22. Residues Met1–Glu26 are disordered.

This sequence belongs to the GrpE family. As to quaternary structure, homodimer.

Its subcellular location is the cytoplasm. Its function is as follows. Participates actively in the response to hyperosmotic and heat shock by preventing the aggregation of stress-denatured proteins, in association with DnaK and GrpE. It is the nucleotide exchange factor for DnaK and may function as a thermosensor. Unfolded proteins bind initially to DnaJ; upon interaction with the DnaJ-bound protein, DnaK hydrolyzes its bound ATP, resulting in the formation of a stable complex. GrpE releases ADP from DnaK; ATP binding to DnaK triggers the release of the substrate protein, thus completing the reaction cycle. Several rounds of ATP-dependent interactions between DnaJ, DnaK and GrpE are required for fully efficient folding. The sequence is that of Protein GrpE from Exiguobacterium sibiricum (strain DSM 17290 / CCUG 55495 / CIP 109462 / JCM 13490 / 255-15).